The sequence spans 937 residues: Protein translocase subunit SecA (937 aa).

ATP contacts are provided by residues glutamine 86, 104-108 (GEGKT), and aspartate 493. The interval 868–889 (LERPSQPTKLAYSAPSEDGDAE) is disordered. The Zn(2+) site is built by cysteine 911, cysteine 913, cysteine 922, and histidine 923. Residues 915 to 937 (SGKKFKQCHGRPGGPTGLTARVS) are disordered.

Belongs to the SecA family. As to quaternary structure, monomer and homodimer. Part of the essential Sec protein translocation apparatus which comprises SecA, SecYEG and auxiliary proteins SecDF. Other proteins may also be involved. Zn(2+) is required as a cofactor.

The protein localises to the cell membrane. It is found in the cytoplasm. The catalysed reaction is ATP + H2O + cellular proteinSide 1 = ADP + phosphate + cellular proteinSide 2.. Functionally, part of the Sec protein translocase complex. Interacts with the SecYEG preprotein conducting channel. Has a central role in coupling the hydrolysis of ATP to the transfer of proteins into and across the cell membrane, serving as an ATP-driven molecular motor driving the stepwise translocation of polypeptide chains across the membrane. The polypeptide is Protein translocase subunit SecA (Nocardioides sp. (strain ATCC BAA-499 / JS614)).